The following is a 276-amino-acid chain: Elongation factor Ts (276 aa).

The tract at residues 81 to 84 (TDFV) is involved in Mg(2+) ion dislocation from EF-Tu.

It belongs to the EF-Ts family.

The protein localises to the cytoplasm. Associates with the EF-Tu.GDP complex and induces the exchange of GDP to GTP. It remains bound to the aminoacyl-tRNA.EF-Tu.GTP complex up to the GTP hydrolysis stage on the ribosome. In Leifsonia xyli subsp. xyli (strain CTCB07), this protein is Elongation factor Ts.